We begin with the raw amino-acid sequence, 483 residues long: MKFIIKLFPEITIKSQSVRLRFIKILTTNIRNVLKNLEDDTLAVVRHWDHIEIRTKDDNLGPQICDALTRVPGIHHILEVEDRSYTDMHNIFEQTLEAYRETLIGKTFCVRVKRRGKHEFSSGDVERYVGGGLNQHIESAKVKLTHPQVTVHLEIDQDKLTLIKARHEGLGGFPIGTQEDVLSLISGGFDSGVSSYMLMRRGCRVHYCFFNLGGSAHEIGVKQVAHYLWNRFGSSHRVRFVAIDFEPVVGEILEKVEDGQMGVVLKRMMVRAASQVAERYGVQALVTGEALGQVSSQTLTNLRLIDNASDTLILRPLISHDKEHIINLAREIGTEDFAKTMPEYCGVISKSPTVKAVKAKIEEEESHFDFSILDRVVNEAKNVDIREIAAQSREQVVEVETVAELADTDVLLDIRAPDEQDEKPLKLDGIEVRTLPFYKLSTQFADLDQSKSYLLYCDRGVMSRLQALYLREQGYTNVKVYRP.

The region spanning 62–166 (PQICDALTRV…QDKLTLIKAR (105 aa)) is the THUMP domain. ATP contacts are provided by residues 184-185 (LI), K266, G288, and Q297. C345 and C457 are oxidised to a cystine. A Rhodanese domain is found at 405-483 (LADTDVLLDI…GYTNVKVYRP (79 aa)). C457 (cysteine persulfide intermediate) is an active-site residue.

Belongs to the ThiI family.

Its subcellular location is the cytoplasm. The enzyme catalyses [ThiI sulfur-carrier protein]-S-sulfanyl-L-cysteine + a uridine in tRNA + 2 reduced [2Fe-2S]-[ferredoxin] + ATP + H(+) = [ThiI sulfur-carrier protein]-L-cysteine + a 4-thiouridine in tRNA + 2 oxidized [2Fe-2S]-[ferredoxin] + AMP + diphosphate. It catalyses the reaction [ThiS sulfur-carrier protein]-C-terminal Gly-Gly-AMP + S-sulfanyl-L-cysteinyl-[cysteine desulfurase] + AH2 = [ThiS sulfur-carrier protein]-C-terminal-Gly-aminoethanethioate + L-cysteinyl-[cysteine desulfurase] + A + AMP + 2 H(+). It participates in cofactor biosynthesis; thiamine diphosphate biosynthesis. Catalyzes the ATP-dependent transfer of a sulfur to tRNA to produce 4-thiouridine in position 8 of tRNAs, which functions as a near-UV photosensor. Also catalyzes the transfer of sulfur to the sulfur carrier protein ThiS, forming ThiS-thiocarboxylate. This is a step in the synthesis of thiazole, in the thiamine biosynthesis pathway. The sulfur is donated as persulfide by IscS. This chain is tRNA sulfurtransferase, found in Yersinia enterocolitica serotype O:8 / biotype 1B (strain NCTC 13174 / 8081).